The chain runs to 393 residues: Formate-dependent phosphoribosylglycinamide formyltransferase (393 aa).

N(1)-(5-phospho-beta-D-ribosyl)glycinamide is bound by residues 22–23 (EL) and glutamate 82. ATP-binding positions include arginine 114, lysine 155, 160 to 165 (SSGHGQ), 195 to 198 (EGFI), and glutamate 203. An ATP-grasp domain is found at 119–308 (RLAAEELGLK…QFALHARAIL (190 aa)). 2 residues coordinate Mg(2+): glutamate 267 and glutamate 279. N(1)-(5-phospho-beta-D-ribosyl)glycinamide-binding positions include aspartate 286, lysine 356, and 363-364 (RR).

Belongs to the PurK/PurT family. In terms of assembly, homodimer.

The catalysed reaction is N(1)-(5-phospho-beta-D-ribosyl)glycinamide + formate + ATP = N(2)-formyl-N(1)-(5-phospho-beta-D-ribosyl)glycinamide + ADP + phosphate + H(+). The protein operates within purine metabolism; IMP biosynthesis via de novo pathway; N(2)-formyl-N(1)-(5-phospho-D-ribosyl)glycinamide from N(1)-(5-phospho-D-ribosyl)glycinamide (formate route): step 1/1. In terms of biological role, involved in the de novo purine biosynthesis. Catalyzes the transfer of formate to 5-phospho-ribosyl-glycinamide (GAR), producing 5-phospho-ribosyl-N-formylglycinamide (FGAR). Formate is provided by PurU via hydrolysis of 10-formyl-tetrahydrofolate. This is Formate-dependent phosphoribosylglycinamide formyltransferase from Actinobacillus pleuropneumoniae serotype 5b (strain L20).